We begin with the raw amino-acid sequence, 89 residues long: MLTRVPVLILAVIVMLALCQEPEKPEKRPALLSRYGRAVLPRYGKRSGNLMESSQNSLTEESSDVVCQLIDGKYICLPVDAVRFRPFFL.

A signal peptide spans 1 to 19 (MLTRVPVLILAVIVMLALC). Positions 20 to 26 (QEPEKPE) are excised as a propeptide. Tyrosine amide occurs at positions 35 and 43. Positions 47–89 (SGNLMESSQNSLTEESSDVVCQLIDGKYICLPVDAVRFRPFFL) are excised as a propeptide.

Expressed in the M1 and M2 pharyngeal neurons from where the LURY-1-1 and LURY-1-2 peptides are secreted.

The protein localises to the secreted. In terms of biological role, acts as a ligand for the npr-22 receptor and controls food-related processes including feeding, lifespan, egg-laying and roaming behavior. Secreted in the presence of food, leading to reduced feeding and roaming behavior and increased egg laying and lifespan. Activity may be latent under normal conditions but induced under conditions that cause hyperactivation of the pharynx such as abrupt refeeding after starvation. The polypeptide is Luqin-like RYamide peptides lury-1 (Caenorhabditis elegans).